The sequence spans 270 residues: Triosephosphate isomerase (270 aa).

27–29 is a binding site for substrate; the sequence is NWK. Catalysis depends on His-114, which acts as the Electrophile. Residue Glu-184 is the Proton acceptor of the active site. Substrate-binding positions include Gly-190, Ser-230, and 251 to 252; that span reads GG.

The protein belongs to the triosephosphate isomerase family. Homodimer.

Its subcellular location is the cytoplasm. The catalysed reaction is D-glyceraldehyde 3-phosphate = dihydroxyacetone phosphate. The protein operates within carbohydrate biosynthesis; gluconeogenesis. It functions in the pathway carbohydrate degradation; glycolysis; D-glyceraldehyde 3-phosphate from glycerone phosphate: step 1/1. Involved in the gluconeogenesis. Catalyzes stereospecifically the conversion of dihydroxyacetone phosphate (DHAP) to D-glyceraldehyde-3-phosphate (G3P). The chain is Triosephosphate isomerase from Chlamydia muridarum (strain MoPn / Nigg).